The chain runs to 297 residues: Putative thiosulfate sulfurtransferase SseA (297 aa).

Rhodanese domains lie at 31–138 and 168–286; these read GAPG…ETTL and ILDA…VPIV. Cysteine 245 acts as the Cysteine persulfide intermediate in catalysis. Arginine 250 serves as a coordination point for substrate.

The enzyme catalyses thiosulfate + hydrogen cyanide = thiocyanate + sulfite + 2 H(+). The sequence is that of Putative thiosulfate sulfurtransferase SseA (sseA) from Mycobacterium bovis (strain ATCC BAA-935 / AF2122/97).